We begin with the raw amino-acid sequence, 146 residues long: Late protein H7 (146 aa).

A helical membrane pass occupies residues 10 to 32 (LAMTAFFGELNTLDIMALIMSIF).

This sequence belongs to the chordopoxvirinae H7 family.

It localises to the membrane. Functionally, contributes to the formation of crescents and immature virions (IV). The protein is Late protein H7 of Vaccinia virus (strain Tian Tan) (VACV).